The sequence spans 972 residues: 116 kDa U5 small nuclear ribonucleoprotein component (972 aa).

M1 is modified (N-acetylmethionine). The segment at 1–54 is disordered; sequence MDTDLYDEFGNYIGPELDSDEDDDELGRETKDLDEMDDDDDDDDIGDHDDDHPG. Composition is skewed to acidic residues over residues 17–26 and 34–48; these read LDSDEDDDEL and DEMDDDDDDDDIGDH. S19 is modified (phosphoserine). Residue K64 forms a Glycyl lysine isopeptide (Lys-Gly) (interchain with G-Cter in SUMO1); alternate linkage. Residue K64 forms a Glycyl lysine isopeptide (Lys-Gly) (interchain with G-Cter in SUMO2); alternate linkage. T86 carries the phosphothreonine modification. One can recognise a tr-type G domain in the interval 127 to 409; that stretch reads ELIRNVTLCG…GIHLTKEELK (283 aa). GTP contacts are provided by residues 136–143, 204–208, and 258–261; these read GHLHHGKT, DTPGH, and NKID.

The protein belongs to the TRAFAC class translation factor GTPase superfamily. Classic translation factor GTPase family. EF-G/EF-2 subfamily. As to quaternary structure, component of the U5 snRNP and the U4/U6-U5 tri-snRNP complex, a building block of the spliceosome. The U4/U6-U5 tri-snRNP complex is composed of the U4, U6 and U5 snRNAs and at least PRPF3, PRPF4, PRPF6, PRPF8, PRPF31, SNRNP200, TXNL4A, SNRNP40, DDX23, CD2BP2, PPIH, SNU13, EFTUD2, SART1 and USP39. Component of the pre-catalytic, catalytic and post-catalytic spliceosome complexes. Component of the minor spliceosome, which splices U12-type introns. Within this complex, interacts with CRIPT. Interacts with ERBB4 and PRPF8. Interacts with PIH1D1. Interacts with RPAP3 and URI1 in a ZNHIT2-dependent manner. Interacts with NRDE2. Interacts with FAM50A. Interacts with UBL5.

The protein localises to the nucleus. Required for pre-mRNA splicing as component of the spliceosome, including pre-catalytic, catalytic and post-catalytic spliceosomal complexes. Component of the U5 snRNP and the U4/U6-U5 tri-snRNP complex, a building block of the spliceosome. As a component of the minor spliceosome, involved in the splicing of U12-type introns in pre-mRNAs. This chain is 116 kDa U5 small nuclear ribonucleoprotein component (EFTUD2), found in Pongo abelii (Sumatran orangutan).